A 476-amino-acid polypeptide reads, in one-letter code: MAQISTTSEHTIQTLERIGAHSHVKGLGLDDQLEPRPSSQGMVGQRAARKAAGLIVKMVQDGRIAGRAILMVGPPSTGKTAIAMGMAQTLGSDVPFTMLSASEVFSLEMSKTEALMQAFRRSIGVRIREEAEVVEGEVVEIQIDRSLTGATKTGKLTIKTTDMETIYELGNKMIDSLQKEKVTAGDVIAIDKASGRITKLGRSFTRARDYDAMGSDTKFVQCPEGELQRRKDVVHTVSLHEIDVINSRTQGFLALFSGDTGEIKPELRDQINIKVGEWREEGKAEIVPGVLFIDEVHMLDIECFSFLNRALESELAPLVIMASNRGICRIRGTRFRSPHGIPIDLLDRVLIISTKPYELADLKQILTIRAAEEEVSLKPEALEVLTRMASETSLRYAINLITTANLAAKRRKADEVEVADVRRVYNLFVDEKRSVQYLKEHAEQFMNESDEYGDIDGLNSGAPIIGRQASAGAVQA.

72 to 80 (VGPPSTGKT) serves as a coordination point for ATP.

It belongs to the RuvB family. In terms of assembly, may form heterododecamers with RVB1. Component of the SWR1 chromatin remodeling complex, the INO80 chromatin remodeling complex, and of the R2TP complex.

The protein resides in the nucleus. The enzyme catalyses ATP + H2O = ADP + phosphate + H(+). In terms of biological role, DNA helicase which participates in several chromatin remodeling complexes, including the SWR1 and the INO80 complexes. The SWR1 complex mediates the ATP-dependent exchange of histone H2A for the H2A variant HZT1 leading to transcriptional regulation of selected genes by chromatin remodeling. The INO80 complex remodels chromatin by shifting nucleosomes and is involved in DNA repair. Also involved in pre-rRNA processing. The chain is RuvB-like helicase 2 (RVB2) from Mycosarcoma maydis (Corn smut fungus).